A 275-amino-acid chain; its full sequence is Enoyl-[acyl-carrier-protein] reductase [NADH] FabI (275 aa).

NAD(+)-binding positions include Gly-13, 19–20 (SI), 64–65 (DV), and Val-92. Ala-95 is a substrate binding site. Residues Tyr-145 and Tyr-155 each act as proton acceptor in the active site. NAD(+) contacts are provided by residues Lys-162 and 191–195 (IRTLA).

The protein belongs to the short-chain dehydrogenases/reductases (SDR) family. FabI subfamily. As to quaternary structure, homotetramer.

It carries out the reaction a 2,3-saturated acyl-[ACP] + NAD(+) = a (2E)-enoyl-[ACP] + NADH + H(+). Its pathway is lipid metabolism; fatty acid biosynthesis. Its function is as follows. Catalyzes the reduction of a carbon-carbon double bond in an enoyl moiety that is covalently linked to an acyl carrier protein (ACP). Involved in the elongation cycle of fatty acid which are used in the lipid metabolism. This is Enoyl-[acyl-carrier-protein] reductase [NADH] FabI (fabI) from Helicobacter pylori (strain ATCC 700392 / 26695) (Campylobacter pylori).